Reading from the N-terminus, the 655-residue chain is Putative sensor protein Sfri_3689 (655 aa).

An N-terminal signal peptide occupies residues 1–17; the sequence is MKTLLLLLIIITMPVLA. The helical transmembrane segment at 252-272 threads the bilayer; that stretch reads FALAILVAIMSAIGMIFTGFI. The Histidine kinase domain maps to 419 to 653; sequence GIAHEINNPT…QIRLIFALAQ (235 aa). Histidine 422 carries the phosphohistidine; by autocatalysis modification.

It localises to the cell membrane. The catalysed reaction is ATP + protein L-histidine = ADP + protein N-phospho-L-histidine.. The protein is Putative sensor protein Sfri_3689 of Shewanella frigidimarina (strain NCIMB 400).